Here is a 122-residue protein sequence, read N- to C-terminus: Ribosome-binding factor A (122 aa).

Belongs to the RbfA family. As to quaternary structure, monomer. Binds 30S ribosomal subunits, but not 50S ribosomal subunits or 70S ribosomes.

It localises to the cytoplasm. One of several proteins that assist in the late maturation steps of the functional core of the 30S ribosomal subunit. Associates with free 30S ribosomal subunits (but not with 30S subunits that are part of 70S ribosomes or polysomes). Required for efficient processing of 16S rRNA. May interact with the 5'-terminal helix region of 16S rRNA. The protein is Ribosome-binding factor A of Burkholderia thailandensis (strain ATCC 700388 / DSM 13276 / CCUG 48851 / CIP 106301 / E264).